Reading from the N-terminus, the 340-residue chain is Ketol-acid reductoisomerase (NADP(+)) (340 aa).

The 180-residue stretch at 3-182 (VQMEYEKDVK…GAARVGLLET (180 aa)) folds into the KARI N-terminal Rossmann domain. NADP(+) contacts are provided by residues 26 to 29 (YGSQ), Arg-49, Ser-53, and 83 to 86 (DEIQ). His-108 is an active-site residue. Gly-134 contacts NADP(+). In terms of domain architecture, KARI C-terminal knotted spans 183-328 (TYKEETEEDL…AELRKAMPFV (146 aa)). The Mg(2+) site is built by Asp-191, Glu-195, Glu-227, and Glu-231. Ser-252 lines the substrate pocket.

This sequence belongs to the ketol-acid reductoisomerase family. Mg(2+) serves as cofactor.

It catalyses the reaction (2R)-2,3-dihydroxy-3-methylbutanoate + NADP(+) = (2S)-2-acetolactate + NADPH + H(+). The catalysed reaction is (2R,3R)-2,3-dihydroxy-3-methylpentanoate + NADP(+) = (S)-2-ethyl-2-hydroxy-3-oxobutanoate + NADPH + H(+). It functions in the pathway amino-acid biosynthesis; L-isoleucine biosynthesis; L-isoleucine from 2-oxobutanoate: step 2/4. It participates in amino-acid biosynthesis; L-valine biosynthesis; L-valine from pyruvate: step 2/4. Its function is as follows. Involved in the biosynthesis of branched-chain amino acids (BCAA). Catalyzes an alkyl-migration followed by a ketol-acid reduction of (S)-2-acetolactate (S2AL) to yield (R)-2,3-dihydroxy-isovalerate. In the isomerase reaction, S2AL is rearranged via a Mg-dependent methyl migration to produce 3-hydroxy-3-methyl-2-ketobutyrate (HMKB). In the reductase reaction, this 2-ketoacid undergoes a metal-dependent reduction by NADPH to yield (R)-2,3-dihydroxy-isovalerate. In Streptococcus gordonii (strain Challis / ATCC 35105 / BCRC 15272 / CH1 / DL1 / V288), this protein is Ketol-acid reductoisomerase (NADP(+)).